The sequence spans 265 residues: Interleukin-1 alpha (265 aa).

The propeptide occupies 1–108; that stretch reads MAKVPDLFED…DTEEVIMKPR (108 aa). The residue at position 78 (Lys78) is an N6-acetyllysine. Residues 78-82 are nuclear localization signal (NLS); sequence KKRRL. Position 83 is a phosphoserine (Ser83). N-linked (GlcNAc...) asparagine glycans are attached at residues Asn98 and Asn137.

This sequence belongs to the IL-1 family. As to quaternary structure, monomer. Interacts with TMED10; the interaction mediates the translocation from the cytoplasm into the ERGIC (endoplasmic reticulum-Golgi intermediate compartment) and thereby secretion. Interacts with IL1R1. Interacts with S100A13; this interaction is the first step in the export of IL1A, followed by direct translocation of this complex across the plasma membrane. In terms of processing, acetylated within its nuclear localization sequence, which impacts subcellular localization. Post-translationally, proteolytic processed by CAPN1 in a calcium-dependent manner. Cleavage from 31 kDa precursor to 18 kDa biologically active molecules. Phosphorylated. Phosphorylation greatly enhances susceptibility to digestion and promotes the conversion of pre-IL1A alpha to the biologically active IL1A.

Its subcellular location is the nucleus. The protein resides in the cytoplasm. It is found in the secreted. Its function is as follows. Cytokine constitutively present intracellularly in nearly all resting non-hematopoietic cells that plays an important role in inflammation and bridges the innate and adaptive immune systems. After binding to its receptor IL1R1 together with its accessory protein IL1RAP, forms the high affinity interleukin-1 receptor complex. Signaling involves the recruitment of adapter molecules such as MYD88, IRAK1 or IRAK4. In turn, mediates the activation of NF-kappa-B and the three MAPK pathways p38, p42/p44 and JNK pathways. Within the cell, acts as an alarmin and cell death results in its liberation in the extracellular space after disruption of the cell membrane to induce inflammation and alert the host to injury or damage. In addition to its role as a danger signal, which occurs when the cytokine is passively released by cell necrosis, directly senses DNA damage and acts as signal for genotoxic stress without loss of cell integrity. The sequence is that of Interleukin-1 alpha (IL1A) from Canis lupus familiaris (Dog).